A 528-amino-acid chain; its full sequence is Cytochrome P450 monooxygenase polB (528 aa).

Residues 3 to 23 (SFFLVCPVAFLGFTICYLVYV) traverse the membrane as a helical segment. Residue cysteine 473 coordinates heme.

It belongs to the cytochrome P450 family. It depends on heme as a cofactor.

The protein resides in the membrane. The catalysed reaction is 4beta-carboxyl motiol + reduced [NADPH--hemoprotein reductase] + O2 = 2alpha-hydroxyl, 4beta-carboxyl motiol + oxidized [NADPH--hemoprotein reductase] + H2O + H(+). It catalyses the reaction 2-deoxypolytolypin + reduced [NADPH--hemoprotein reductase] + O2 = polytolypin + oxidized [NADPH--hemoprotein reductase] + H2O + H(+). The protein operates within secondary metabolite biosynthesis; terpenoid biosynthesis. Cytochrome P450 monooxygenase; part of the gene cluster that mediates the biosynthesis of antifungal fernane-type triterpenoid polytolypin. PolB acts as a hydroxylase and installs the 2-alpha-hydroxyl group in polytolypin. Within the pathway, the triterpene cyclase polA first catalyzes the cyclization of 2,3-oxidosqualene to motiol, polC converts the 4-alpha-methyl group of motiol to a carboxyl group, polB is responsible for appending a hydroxyl group at the 2-alpha position and polE is a dual functional P450, which can catalyze the formation of both the 1-beta-hydroxyl group and 10-beta-carboxyl group. The protein is Cytochrome P450 monooxygenase polB of Polytolypa hystricis (strain UAMH7299).